The sequence spans 562 residues: Scaffold protein FimL (562 aa).

In terms of assembly, interacts with PilG and FimV.

The protein localises to the cytoplasm. Regulates multiple virulence functions including type IV pilus (T4P)-mediated assembly and twitching motility as well as cAMP-dependent virulence gene expression. Regulates intracellular cyclic AMP (cAMP) levels through the activation of adenylate cyclase CyaB. Also functions as a scaffold linking FimV and PilG at the pole, where type IV pilus (T4P), the Chp chemosensory system and the CyaB adenylate cyclase interact. This chain is Scaffold protein FimL (fimL), found in Pseudomonas aeruginosa (strain ATCC 15692 / DSM 22644 / CIP 104116 / JCM 14847 / LMG 12228 / 1C / PRS 101 / PAO1).